Reading from the N-terminus, the 331-residue chain is Quinone oxidoreductase (331 aa).

Ala-2 is modified (N-acetylalanine). Lys-23 carries the post-translational modification N6-acetyllysine. The residue at position 35 (Ser-35) is a Phosphoserine. NADP(+)-binding positions include Tyr-53, 158–161 (SGGV), and Gly-181. Lys-186 carries the post-translational modification N6-acetyllysine. NADP(+)-binding positions include His-200, Asn-231, 248 to 251 (VGCR), and 271 to 273 (VSL). N6-succinyllysine is present on Lys-298.

The protein belongs to the zinc-containing alcohol dehydrogenase family. Quinone oxidoreductase subfamily. As to quaternary structure, homotetramer.

It localises to the cytoplasm. The enzyme catalyses 2 a quinone + NADPH + H(+) = 2 a 1,4-benzosemiquinone + NADP(+). Does not have alcohol dehydrogenase activity. Binds NADP and acts through a one-electron transfer process. Orthoquinones, such as 1,2-naphthoquinone or 9,10-phenanthrenequinone, are the best substrates (in vitro). May act in the detoxification of xenobiotics. Interacts with (AU)-rich elements (ARE) in the 3'-UTR of target mRNA species and enhances their stability. NADPH binding interferes with mRNA binding. The chain is Quinone oxidoreductase (Cryz) from Mus musculus (Mouse).